The chain runs to 263 residues: Glucosamine-6-phosphate deaminase (263 aa).

The active-site Proton acceptor; for enolization step is Asp-67. Asn-136 functions as the For ring-opening step in the catalytic mechanism. The active-site Proton acceptor; for ring-opening step is the His-138. The active-site For ring-opening step is Glu-143.

It belongs to the glucosamine/galactosamine-6-phosphate isomerase family. NagB subfamily. As to quaternary structure, homohexamer.

The catalysed reaction is alpha-D-glucosamine 6-phosphate + H2O = beta-D-fructose 6-phosphate + NH4(+). It participates in amino-sugar metabolism; N-acetylneuraminate degradation; D-fructose 6-phosphate from N-acetylneuraminate: step 5/5. Functionally, catalyzes the reversible isomerization-deamination of glucosamine 6-phosphate (GlcN6P) to form fructose 6-phosphate (Fru6P) and ammonium ion. This chain is Glucosamine-6-phosphate deaminase, found in Shewanella halifaxensis (strain HAW-EB4).